Here is a 100-residue protein sequence, read N- to C-terminus: Urease subunit gamma (100 aa).

This sequence belongs to the urease gamma subunit family. In terms of assembly, heterotrimer of UreA (gamma), UreB (beta) and UreC (alpha) subunits. Three heterotrimers associate to form the active enzyme.

It is found in the cytoplasm. It catalyses the reaction urea + 2 H2O + H(+) = hydrogencarbonate + 2 NH4(+). Its pathway is nitrogen metabolism; urea degradation; CO(2) and NH(3) from urea (urease route): step 1/1. The sequence is that of Urease subunit gamma from Photorhabdus laumondii subsp. laumondii (strain DSM 15139 / CIP 105565 / TT01) (Photorhabdus luminescens subsp. laumondii).